We begin with the raw amino-acid sequence, 184 residues long: MQLDKQNLIWIDLEMTGLDPESERIIEIATIVTDKHLNILAEGPVLAIHQSDECLAKMNDWCMKTHTENGLVERVKNSRLTERAAELQTLDFLKKWVPKGVSPICGNSVSQDKRFLFKYMPELADYFHYRHLDVSTLKELASRWKPDVLKGFTKKNTHLALDDIRESIAELAYYREHFINLKNE.

One can recognise an Exonuclease domain in the interval 8–171 (LIWIDLEMTG…DDIRESIAEL (164 aa)). Residue tyrosine 129 is part of the active site.

This sequence belongs to the oligoribonuclease family.

The protein resides in the cytoplasm. Its function is as follows. 3'-to-5' exoribonuclease specific for small oligoribonucleotides. This Pasteurella multocida (strain Pm70) protein is Oligoribonuclease.